The following is a 343-amino-acid chain: L-threonine 3-dehydrogenase (343 aa).

Zn(2+) is bound at residue cysteine 40. Catalysis depends on charge relay system residues threonine 42 and histidine 45. 6 residues coordinate Zn(2+): histidine 65, glutamate 66, cysteine 95, cysteine 98, cysteine 101, and cysteine 109. Residues isoleucine 177, aspartate 197, arginine 202, 264–266 (LGI), and 288–289 (IY) each bind NAD(+).

This sequence belongs to the zinc-containing alcohol dehydrogenase family. Homotetramer. It depends on Zn(2+) as a cofactor.

It localises to the cytoplasm. It catalyses the reaction L-threonine + NAD(+) = (2S)-2-amino-3-oxobutanoate + NADH + H(+). It functions in the pathway amino-acid degradation; L-threonine degradation via oxydo-reductase pathway; glycine from L-threonine: step 1/2. Its function is as follows. Catalyzes the NAD(+)-dependent oxidation of L-threonine to 2-amino-3-ketobutyrate. This Aliivibrio fischeri (strain ATCC 700601 / ES114) (Vibrio fischeri) protein is L-threonine 3-dehydrogenase.